The primary structure comprises 91 residues: Cell division topological specificity factor (91 aa).

This sequence belongs to the MinE family.

In terms of biological role, prevents the cell division inhibition by proteins MinC and MinD at internal division sites while permitting inhibition at polar sites. This ensures cell division at the proper site by restricting the formation of a division septum at the midpoint of the long axis of the cell. The protein is Cell division topological specificity factor of Desulfitobacterium hafniense (strain DSM 10664 / DCB-2).